The sequence spans 330 residues: Tryptophan--tRNA ligase (330 aa).

Residues 6 to 8 and 14 to 15 contribute to the ATP site; these read QPT and GN. The 'HIGH' region signature appears at 7–15; sequence PTGSLHLGN. Asp-130 is a binding site for L-tryptophan. ATP contacts are provided by residues 142–144, Val-185, and 194–198; these read GED and KMSKS. Positions 194–198 match the 'KMSKS' region motif; it reads KMSKS.

This sequence belongs to the class-I aminoacyl-tRNA synthetase family. As to quaternary structure, homodimer.

It localises to the cytoplasm. The enzyme catalyses tRNA(Trp) + L-tryptophan + ATP = L-tryptophyl-tRNA(Trp) + AMP + diphosphate + H(+). Its function is as follows. Catalyzes the attachment of tryptophan to tRNA(Trp). This chain is Tryptophan--tRNA ligase, found in Thermosynechococcus vestitus (strain NIES-2133 / IAM M-273 / BP-1).